The sequence spans 168 residues: Endoribonuclease YbeY (168 aa).

Positions 126, 130, and 136 each coordinate Zn(2+).

This sequence belongs to the endoribonuclease YbeY family. Requires Zn(2+) as cofactor.

Its subcellular location is the cytoplasm. In terms of biological role, single strand-specific metallo-endoribonuclease involved in late-stage 70S ribosome quality control and in maturation of the 3' terminus of the 16S rRNA. The protein is Endoribonuclease YbeY of Sinorhizobium medicae (strain WSM419) (Ensifer medicae).